A 229-amino-acid polypeptide reads, in one-letter code: 2-C-methyl-D-erythritol 4-phosphate cytidylyltransferase (229 aa).

The protein belongs to the IspD/TarI cytidylyltransferase family. IspD subfamily.

The catalysed reaction is 2-C-methyl-D-erythritol 4-phosphate + CTP + H(+) = 4-CDP-2-C-methyl-D-erythritol + diphosphate. It participates in isoprenoid biosynthesis; isopentenyl diphosphate biosynthesis via DXP pathway; isopentenyl diphosphate from 1-deoxy-D-xylulose 5-phosphate: step 2/6. In terms of biological role, catalyzes the formation of 4-diphosphocytidyl-2-C-methyl-D-erythritol from CTP and 2-C-methyl-D-erythritol 4-phosphate (MEP). This chain is 2-C-methyl-D-erythritol 4-phosphate cytidylyltransferase, found in Clostridium botulinum (strain Langeland / NCTC 10281 / Type F).